The following is a 267-amino-acid chain: Small ribosomal subunit protein uS2 (267 aa).

The disordered stretch occupies residues 232–267 (ATVREEEFADAPAEDAKPARRAPAKKAAADKGEAQA). The segment covering 258-267 (AAADKGEAQA) has biased composition (basic and acidic residues).

The protein belongs to the universal ribosomal protein uS2 family.

The polypeptide is Small ribosomal subunit protein uS2 (Stenotrophomonas maltophilia (strain R551-3)).